The chain runs to 95 residues: Cerebratulus toxin A-III (95 aa).

3 disulfide bridges follow: C17-C38, C23-C34, and C48-C61.

The protein belongs to the worm cytolysin family.

Its subcellular location is the secreted. Its function is as follows. Permeabilizes a variety of cells. Forms large pores which allows the release of large proteins almost as rapidly as small organic molecules and inorganic ions. At sublytic concentrations, the toxin also inhibits protein kinase C and endogenous voltage-gated cation selective (sodium, calcium) channels occurring in the nervous and cardiovascular systems. The protein is Cerebratulus toxin A-III of Cerebratulus lacteus (Milky ribbon worm).